The chain runs to 393 residues: NAD(P)H-quinone oxidoreductase subunit H, chloroplastic (393 aa).

It belongs to the complex I 49 kDa subunit family. In terms of assembly, NDH is composed of at least 16 different subunits, 5 of which are encoded in the nucleus.

Its subcellular location is the plastid. It is found in the chloroplast thylakoid membrane. The catalysed reaction is a plastoquinone + NADH + (n+1) H(+)(in) = a plastoquinol + NAD(+) + n H(+)(out). The enzyme catalyses a plastoquinone + NADPH + (n+1) H(+)(in) = a plastoquinol + NADP(+) + n H(+)(out). In terms of biological role, NDH shuttles electrons from NAD(P)H:plastoquinone, via FMN and iron-sulfur (Fe-S) centers, to quinones in the photosynthetic chain and possibly in a chloroplast respiratory chain. The immediate electron acceptor for the enzyme in this species is believed to be plastoquinone. Couples the redox reaction to proton translocation, and thus conserves the redox energy in a proton gradient. This chain is NAD(P)H-quinone oxidoreductase subunit H, chloroplastic, found in Zygnema circumcarinatum (Green alga).